The sequence spans 126 residues: Protein ApaG (126 aa).

The ApaG domain maps to 2-126; sequence SDPRYQIDVS…FRLAVPGALH (125 aa).

The chain is Protein ApaG from Pseudomonas fluorescens (strain SBW25).